Here is a 160-residue protein sequence, read N- to C-terminus: MSSKEKEQEAEKGKQGWIIPTVIPPEEWSTFRYRGKTLEELLNMPMDEFIKLLPARQRRSLKRGLKPEHRKLLEKIRKAKKLMAQGKKVVIKTHCRDMIILPEMVGLTIHVYNGITYIPVFISPWHIGHYLGEFAITTKIVQHGEPGLKATRSSLHIAAK.

Belongs to the universal ribosomal protein uS19 family.

In terms of biological role, protein S19 forms a complex with S13 that binds strongly to the 16S ribosomal RNA. In Pyrobaculum islandicum (strain DSM 4184 / JCM 9189 / GEO3), this protein is Small ribosomal subunit protein uS19.